Reading from the N-terminus, the 158-residue chain is ABA-responsive protein ABR18 (158 aa).

It belongs to the BetVI family.

This is ABA-responsive protein ABR18 from Pisum sativum (Garden pea).